We begin with the raw amino-acid sequence, 425 residues long: G protein-activated inward rectifier potassium channel 2 (425 aa).

Residues 1 to 91 (MTMAKLTESM…IFTTLVDLKW (91 aa)) are Cytoplasmic-facing. Phosphoserine occurs at positions 18 and 25. The chain crosses the membrane as a helical span at residues 92–116 (RFNLLIFVMVYTVTWLFFGMIWWLI). Topologically, residues 117 to 140 (AYIRGDMDHIEDPSWTPCVTNLNG) are extracellular. The helical; Pore-forming intramembrane region spans 141-152 (FVSAFLFSIETE). The pore-forming intramembrane region spans 153–159 (TTIGYGY). The short motif at 154–159 (TIGYGY) is the Selectivity filter element. At 160-168 (RVITDKCPE) the chain is on the extracellular side. Residues 169 to 190 (GIILLLIQSVLGSIVNAFMVGC) traverse the membrane as a helical segment. Residues 191-425 (MFVKISQPKK…VANLENESKV (235 aa)) are Cytoplasmic-facing. Positions 392–425 (NQHAELETEEEEKNPEELTERNGDVANLENESKV) are disordered. The short motif at 422–425 (ESKV) is the PDZ-binding element.

Belongs to the inward rectifier-type potassium channel (TC 1.A.2.1) family. KCNJ6 subfamily. In terms of assembly, associates with KCNJ3/GIRK1 or KCNJ5/GRIK4 to form a G-protein-activated heteromultimer pore-forming unit. The resulting inward current is much larger. Interacts (via PDZ-binding motif) with SNX27 (via PDZ domain); the interaction is required for recycling to the plasma membrane when endocytosed and prevent degradation in lysosomes. Pancreatic beta cells and brain.

The protein resides in the membrane. The enzyme catalyses K(+)(in) = K(+)(out). Its activity is regulated as follows. Activated by phosphatidylinositol 4,5 biphosphate (PtdIns(4,5)P2). Functionally, inward rectifier potassium channels are characterized by a greater tendency to allow potassium to flow into the cell rather than out of it. Their voltage dependence is regulated by the concentration of extracellular potassium; as external potassium is raised, the voltage range of the channel opening shifts to more positive voltages. The inward rectification is mainly due to the blockage of outward current by internal magnesium. This potassium channel may be involved in the regulation of insulin secretion by glucose and/or neurotransmitters acting through G-protein-coupled receptors. This is G protein-activated inward rectifier potassium channel 2 (Kcnj6) from Rattus norvegicus (Rat).